Reading from the N-terminus, the 123-residue chain is Large ribosomal subunit protein uL14 (123 aa).

Belongs to the universal ribosomal protein uL14 family. In terms of assembly, part of the 50S ribosomal subunit. Forms a cluster with proteins L3 and L19. In the 70S ribosome, L14 and L19 interact and together make contacts with the 16S rRNA in bridges B5 and B8.

Binds to 23S rRNA. Forms part of two intersubunit bridges in the 70S ribosome. The polypeptide is Large ribosomal subunit protein uL14 (Pectobacterium atrosepticum (strain SCRI 1043 / ATCC BAA-672) (Erwinia carotovora subsp. atroseptica)).